Reading from the N-terminus, the 216-residue chain is Somatotropin (216 aa).

Residues 1–26 (MAAGPRTSVLLAFALLCLPWTQEVGA) form the signal peptide. H45 lines the Zn(2+) pocket. C78 and C189 form a disulfide bridge. Residue S131 is modified to Phosphoserine. E198 lines the Zn(2+) pocket. A disulfide bridge links C206 with C214.

The protein belongs to the somatotropin/prolactin family.

The protein localises to the secreted. Plays an important role in growth control. Its major role in stimulating body growth is to stimulate the liver and other tissues to secrete IGF1. It stimulates both the differentiation and proliferation of myoblasts. It also stimulates amino acid uptake and protein synthesis in muscle and other tissues. This is Somatotropin (GH1) from Hippopotamus amphibius (Hippopotamus).